Reading from the N-terminus, the 412-residue chain is Probable cystathionine gamma-synthase 2 (412 aa).

Pyridoxal 5'-phosphate-binding residues include Tyr76, Arg78, Gly106, Met107, Tyr131, Ser226, and Thr228. Lys229 carries the N6-(pyridoxal phosphate)lysine modification.

This sequence belongs to the trans-sulfuration enzymes family. Requires pyridoxal 5'-phosphate as cofactor.

The catalysed reaction is O-phospho-L-homoserine + L-cysteine = L,L-cystathionine + phosphate. It carries out the reaction O-succinyl-L-homoserine + L-cysteine = L,L-cystathionine + succinate + H(+). The protein operates within amino-acid biosynthesis; L-methionine biosynthesis via de novo pathway; L-cystathionine from O-succinyl-L-homoserine: step 1/1. Its function is as follows. Catalyzes the first committed step of methionine (Met) biosynthesis. Catalyzes the formation of L-cystathionine from homoserine esters and L-cysteine, via a gamma-replacement reaction. This chain is Probable cystathionine gamma-synthase 2, found in Arabidopsis thaliana (Mouse-ear cress).